Consider the following 965-residue polypeptide: MANRNLEKLASIDAHLRLLVPGKVSEDDKLIEYDALLLDKFLDILQDLHGEDLKETVQECYELSAEYEGKRDPKKLEELGSVLTSLDPGDSIVIAKAFSHMLNLANLAEEVQIAYRRRIKLKKGDFADEAHATTESDMEETLKKLVYKLNKSPEEVFDALKNQTVDLVLTAHPTQSVRRSLLQKHGRIRNCLAQLYAKDITPDDKQELDEALHREIQAAFRTDEIRRTQPTPQDEMRAGMSYFHETIWKGVPKFLRRVDTALKNIGINERVPYNAPLIQFSSWMGGDRDGNPRVTPEVTRDVCLLARMMAANMYFSQIEDLMFEMSMWRCTDELRVRAEELFRTARRDVKHYIEFWKQVPPTEPYRVILGDVRDKLYNTRERARHLLAHDISDIPEEAVYTNVEQFLEPLELCYRSLCACGDRVIADGSLLDFLRQVSTFGLSLVKLDIRQESDRHTDVLDAITQHLEIGSYREWSEEKRQEWLLAELSGKRPLFGSDLPKTEEIKDVLDTFNVLAELPSDCFGAYIISMATSPSDVLAVELLQRECHVKQPLRVVPLFEKLADLEAAPAAMARLFSIDWYKNRINGKQEVMIGYSDSGKDAGRFSAAWQLYKAQEELKNVAKEFGVKLVMFHGRGGTVGRGGGPTHLAILSQPPDTIQGSLRVTVQGEVIEQSFGEEHLCFRTLQRFCAATLEHGMNPPISPRPEWRELMDQMAVVATEQYRSIVFKEPRFVEYFRLATPELEYGRMNIGSRPSKRKPSGGIESLRAIPWIFAWTQTRFHLPVWLGFGAAFKQAIQKDSKNLQMLQEMYKTWPFFRVTIDLVEMVFAKGDPGIAALNDKLLVSEDLWPFGESLRANYEETKDYLLKIAGHKDLLEGDPYLKQRLKLRDSYITTLNVCQAYTLKRTRDPNYHVTLRPHISKEYAEPSKPADELIHLNPTSEYAPGLEDTLILTMKGIAAGMQNTG.

At Ser11 the chain carries Phosphoserine. The active site involves His172. D-glucose 6-phosphate is bound by residues Trp283, Arg450, and Asp597. Lys600 is an active-site residue. Arg635 contributes to the D-glucose 6-phosphate binding site. Arg641 is an active-site residue. Arg641 serves as a coordination point for L-aspartate. Thr665 provides a ligand contact to D-glucose 6-phosphate. Gln673 serves as a coordination point for L-aspartate. Residues Arg753 and 767–769 (RAI) each bind D-glucose 6-phosphate. Positions 829, 888, and 963 each coordinate L-aspartate.

This sequence belongs to the PEPCase type 1 family. Homotetramer. It depends on Mg(2+) as a cofactor. Expressed in roots and stems and at low levels in leaves. Preferentially expressed in the phloem and in root tips.

The protein localises to the cytoplasm. The enzyme catalyses oxaloacetate + phosphate = phosphoenolpyruvate + hydrogencarbonate. Activated by the allosteric regulator glucose-6-phosphate. Inhibited by malate and aspartate. Up regulated by light-reversible phosphorylation. Its function is as follows. Through the carboxylation of phosphoenolpyruvate (PEP) it forms oxaloacetate, a four-carbon dicarboxylic acid source for the tricarboxylic acid cycle. May be involved in phloem loading with sucrose and in anions and cations uptake and amino acid biosynthesis in roots. The chain is Phosphoenolpyruvate carboxylase 1 from Flaveria trinervia (Clustered yellowtops).